The chain runs to 295 residues: Indole-3-glycerol phosphate synthase (295 aa).

It belongs to the TrpC family.

The enzyme catalyses 1-(2-carboxyphenylamino)-1-deoxy-D-ribulose 5-phosphate + H(+) = (1S,2R)-1-C-(indol-3-yl)glycerol 3-phosphate + CO2 + H2O. Its pathway is amino-acid biosynthesis; L-tryptophan biosynthesis; L-tryptophan from chorismate: step 4/5. The protein is Indole-3-glycerol phosphate synthase of Prochlorococcus marinus (strain NATL1A).